The sequence spans 241 residues: Uridylate kinase (241 aa).

An ATP-binding site is contributed by 15–18 (KLSG). The interval 23–28 (GSEGFG) is involved in allosteric activation by GTP. A UMP-binding site is contributed by G57. Residues G58 and R62 each contribute to the ATP site. Residues D77 and 138-145 (TGNPFFTT) each bind UMP. ATP-binding residues include T165, F171, and D174.

This sequence belongs to the UMP kinase family. As to quaternary structure, homohexamer.

The protein localises to the cytoplasm. It catalyses the reaction UMP + ATP = UDP + ADP. It participates in pyrimidine metabolism; CTP biosynthesis via de novo pathway; UDP from UMP (UMPK route): step 1/1. With respect to regulation, allosterically activated by GTP. Inhibited by UTP. Functionally, catalyzes the reversible phosphorylation of UMP to UDP. The sequence is that of Uridylate kinase from Klebsiella pneumoniae subsp. pneumoniae (strain ATCC 700721 / MGH 78578).